A 250-amino-acid chain; its full sequence is Phosphate import ATP-binding protein PstB (250 aa).

Residues 4–245 (LTARDLKLSF…PRHELTEKYV (242 aa)) enclose the ABC transporter domain. 36–43 (GPSGSGKS) is a binding site for ATP.

It belongs to the ABC transporter superfamily. Phosphate importer (TC 3.A.1.7) family. The complex is composed of two ATP-binding proteins (PstB), two transmembrane proteins (PstC and PstA) and a solute-binding protein (PstS).

Its subcellular location is the cell membrane. It carries out the reaction phosphate(out) + ATP + H2O = ADP + 2 phosphate(in) + H(+). Its function is as follows. Part of the ABC transporter complex PstSACB involved in phosphate import. Responsible for energy coupling to the transport system. The sequence is that of Phosphate import ATP-binding protein PstB from Pyrobaculum aerophilum (strain ATCC 51768 / DSM 7523 / JCM 9630 / CIP 104966 / NBRC 100827 / IM2).